The chain runs to 270 residues: Sorting nexin-11 (270 aa).

Residues 16-132 (VITVRVQDPR…HLFLQSQLSV (117 aa)) form the PX domain. Residues R59, K85, and R99 each coordinate a 1,2-diacyl-sn-glycero-3-phospho-(1D-myo-inositol-3-phosphate). The important for membrane trafficking stretch occupies residues 135-139 (IEACV). A compositionally biased stretch (basic and acidic residues) spans 168 to 177 (SSSHLAKGDQ). Positions 168-203 (SSSHLAKGDQPKSCCFLPRSGRRSSPSPPPSEEKDH) are disordered.

The protein belongs to the sorting nexin family. Monomer. Interacts with TRPV3; this interaction promotes TRPV3 trafficking from the cell membrane to lysosome for degradation.

The protein localises to the cell membrane. Its subcellular location is the endosome. The protein resides in the cytoplasm. In terms of biological role, phosphoinositide-binding protein involved in protein sorting and membrane trafficking in endosomes. Regulates the levels of TRPV3 by promoting its trafficking from the cell membrane to lysosome for degradation. This is Sorting nexin-11 (SNX11) from Homo sapiens (Human).